Reading from the N-terminus, the 275-residue chain is Dihydropteroate synthase (275 aa).

Residues 15-267 enclose the Pterin-binding domain; that stretch reads PQIMGILNFT…DVAATSDMLK (253 aa). Mg(2+) is bound at residue Asn-22. Residues Thr-62, Asp-96, Asn-115, Asp-185, Lys-221, and 255–257 contribute to the (7,8-dihydropterin-6-yl)methyl diphosphate site; that span reads RVH.

The protein belongs to the DHPS family. As to quaternary structure, homodimer. Requires Mg(2+) as cofactor.

It carries out the reaction (7,8-dihydropterin-6-yl)methyl diphosphate + 4-aminobenzoate = 7,8-dihydropteroate + diphosphate. Its pathway is cofactor biosynthesis; tetrahydrofolate biosynthesis; 7,8-dihydrofolate from 2-amino-4-hydroxy-6-hydroxymethyl-7,8-dihydropteridine diphosphate and 4-aminobenzoate: step 1/2. In terms of biological role, catalyzes the condensation of para-aminobenzoate (pABA) with 6-hydroxymethyl-7,8-dihydropterin diphosphate (DHPt-PP) to form 7,8-dihydropteroate (H2Pte), the immediate precursor of folate derivatives. The sequence is that of Dihydropteroate synthase (folP-A) from Haemophilus influenzae (strain ATCC 51907 / DSM 11121 / KW20 / Rd).